Here is a 177-residue protein sequence, read N- to C-terminus: Inorganic pyrophosphatase (177 aa).

Residues Lys29, Arg43, and Tyr55 each contribute to the substrate site. Residues Asp65, Asp70, and Asp102 each coordinate Mg(2+). Substrate is bound at residue Tyr141.

The protein belongs to the PPase family. In terms of assembly, homohexamer. Mg(2+) serves as cofactor.

Its subcellular location is the cytoplasm. The catalysed reaction is diphosphate + H2O = 2 phosphate + H(+). Catalyzes the hydrolysis of inorganic pyrophosphate (PPi) forming two phosphate ions. This Aquifex pyrophilus protein is Inorganic pyrophosphatase.